We begin with the raw amino-acid sequence, 829 residues long: MTPKFDIDYVLANITEDDKIALLSGSDFWHTHAIPKFNVPPIRTTDGPNGIRGTKFFAGVPAACLPCGTALGATWDRDLLHQAGVLLGKECLAKGAHCWLGPTINMQRSPLGGRGFESFAEDPHLSGIMAKSIILGCESTGVISTVKHYVGNDQEHERRAVDVLVTPRALREIYLRPFQIVARDAHPGALMTSYNKINGKHVVENPAMLDIVRKDWHWDPLIMSDWLGTYTTIDSLNAGLDLEMPGPTRYRGKYIESAMQARLIKQSTISKRARKVLEFVERASRAPVSADETGRDFPEDRALNRTLCANSIVLLKNDGNLLPIPKTVKKIALIGSHVKTPAISGGGSASLEPYYAVSLYDAVVEALPDAEILYEAGAYAHRMLPVIDRMLSNAVIHFYNEPPEKERTLLATEPVVNTAFQLMDYNAPGLNRALFWATLIGEFTPDVSGLWDFGLTVFGTATLFIDDEMVIDNATRQTRGTAFFGKGTVQEVGQKQLTAGQTYKIRIEFGSANTSPMKAIGVVHFGGGAAHLGACLHMDPEQMVANAVRVAAEADYTIVCTGLNRDWESEGFDRPDMDLPPGIDALISSVLDVAADRTVIVNQSGTPVTMPWAHRARGIVQAWYGGNETGHGIADVLFGDVNPSGKLPLSWPADVRHNPTYLNNMSVGGRMLYGEDVYIGYRFYEKVGREVLFPFGHGLSYTTFHVSPEATVSPIVFSSDSPPTATVLVKNTGPMAGAQTLQLYIAAPNSATPRPVKELHGFTKVFLQSGEERSVSIHIDRYATSFWDEIEDMWKSEEGVYQVLIGTSSQEIVSRGEFRVEQTRYWRGV.

N-linked (GlcNAc...) asparagine glycosylation is present at Asn-13. Residue Asp-225 is part of the active site. Asn-304, Asn-473, Asn-602, Asn-627, and Asn-664 each carry an N-linked (GlcNAc...) asparagine glycan. In terms of domain architecture, PA14 spans 389–548; the sequence is RMLSNAVIHF…DPEQMVANAV (160 aa).

It belongs to the glycosyl hydrolase 3 family.

It localises to the secreted. The enzyme catalyses Hydrolysis of terminal, non-reducing beta-D-glucosyl residues with release of beta-D-glucose.. The protein operates within glycan metabolism; cellulose degradation. In terms of biological role, beta-glucosidases are one of a number of cellulolytic enzymes involved in the degradation of cellulosic biomass. Catalyzes the last step releasing glucose from the inhibitory cellobiose. The protein is Probable beta-glucosidase H (bglH) of Aspergillus fumigatus (strain ATCC MYA-4609 / CBS 101355 / FGSC A1100 / Af293) (Neosartorya fumigata).